The following is a 119-amino-acid chain: Large ribosomal subunit protein uL22 (119 aa).

The protein belongs to the universal ribosomal protein uL22 family. Part of the 50S ribosomal subunit.

This protein binds specifically to 23S rRNA; its binding is stimulated by other ribosomal proteins, e.g. L4, L17, and L20. It is important during the early stages of 50S assembly. It makes multiple contacts with different domains of the 23S rRNA in the assembled 50S subunit and ribosome. Functionally, the globular domain of the protein is located near the polypeptide exit tunnel on the outside of the subunit, while an extended beta-hairpin is found that lines the wall of the exit tunnel in the center of the 70S ribosome. This Rickettsia bellii (strain OSU 85-389) protein is Large ribosomal subunit protein uL22.